A 284-amino-acid chain; its full sequence is MAGGDNNSQTTNGGSGHEQRAMEEGRKQEEFAADGQGCGLAFSVPFIQKIIAEIFGTYFLIFAGCGAVTINQSKNGQITFPGVAIVWGLAVMVMVYAVGHISGAHFNPAVTLAFATCRRFPWRQVPAYAAAQMLGATLAAGTLRLMFGGRHEHFPGTLPAGSDVQSLVLEFIITFYLMFVISGVATDNRAIGELAGLAVGATILLNVLIAGPISGASMNPARSLGPAMIGGEYRSIWVYIVGPVAGAVAGAWAYNIIRFTNKPLREITKSGSFLKSMNRMNSST.

The segment covering 1-12 (MAGGDNNSQTTN) has biased composition (polar residues). The tract at residues 1 to 28 (MAGGDNNSQTTNGGSGHEQRAMEEGRKQ) is disordered. The segment covering 17-28 (HEQRAMEEGRKQ) has biased composition (basic and acidic residues). A run of 2 helical transmembrane segments spans residues 50 to 70 (IIAE…AVTI) and 78 to 98 (ITFP…VYAV). The short motif at 107-109 (NPA) is the NPA 1 element. 3 consecutive transmembrane segments (helical) span residues 129 to 149 (AAAQ…MFGG), 166 to 186 (SLVL…GVAT), and 194 to 214 (LAGL…GPIS). An NPA 2 motif is present at residues 219–221 (NPA). The helical transmembrane segment at 236–256 (IWVYIVGPVAGAVAGAWAYNI) threads the bilayer.

This sequence belongs to the MIP/aquaporin (TC 1.A.8) family. NIP (TC 1.A.8.12) subfamily. As to expression, expressed in leaves and at lower levels in roots and anthers.

It localises to the membrane. Functionally, aquaporins facilitate the transport of water and small neutral solutes across cell membranes. This chain is Aquaporin NIP1-1 (NIP1-1), found in Oryza sativa subsp. japonica (Rice).